A 490-amino-acid chain; its full sequence is AP-5 complex subunit mu-1 (490 aa).

The MHD domain maps to 206–476; that stretch reads KAQISISITE…LISSDYYIWN (271 aa).

Belongs to the adaptor complexes medium subunit family. As to quaternary structure, probably part of the adaptor protein complex 5 (AP-5) a tetramer composed of AP5B1, AP5M1, AP5S1 and AP5Z1. As to expression, widely expressed, including in small intestine and testis. In small intestine, highly expressed in cytoplasm of villi epithelial cells and internal glands. In testis, selectively expressed in maturing sperm cells (at protein level).

The protein localises to the cytoplasm. It localises to the cytosol. The protein resides in the late endosome membrane. It is found in the lysosome membrane. Its function is as follows. As part of AP-5, a probable fifth adaptor protein complex it may be involved in endosomal transport. The sequence is that of AP-5 complex subunit mu-1 (Ap5m1) from Mus musculus (Mouse).